A 213-amino-acid polypeptide reads, in one-letter code: Ergothioneine transport ATP-binding protein EgtV (213 aa).

An ABC transporter domain is found at 5–212; that stretch reads VTIENVSFNY…ATKTLEIKAL (208 aa). An ATP-binding site is contributed by 37 to 44; it reads GESGSGKS.

The protein belongs to the ABC transporter superfamily. As to quaternary structure, the complex is composed of two ATP-binding proteins (EgtV) and two transmembrane proteins (EgtU).

It is found in the cell inner membrane. It catalyses the reaction ergothioneine(out) + ATP + H2O = ergothioneine(in) + ADP + phosphate + H(+). Its function is as follows. Part of the ABC transporter complex EgtUV involved in the uptake of ergothioneine (EGT), a natural low-molecular weight (LMW) thiol antioxidant which protects H.pylori against bleach stress. Responsible for energy coupling to the transport system. The polypeptide is Ergothioneine transport ATP-binding protein EgtV (Helicobacter pylori (strain G27)).